A 127-amino-acid polypeptide reads, in one-letter code: Fluoride-specific ion channel FluC (127 aa).

The next 4 helical transmembrane spans lie at 1–21, 32–52, 71–91, and 96–116; these read MMSY…RHMV, EFPF…GAVV, TGIL…VLLY, and VFLA…ALLL. Na(+) is bound by residues Gly75 and Thr78.

It belongs to the fluoride channel Fluc/FEX (TC 1.A.43) family.

The protein resides in the cell inner membrane. It catalyses the reaction fluoride(in) = fluoride(out). With respect to regulation, na(+) is not transported, but it plays an essential structural role and its presence is essential for fluoride channel function. Fluoride-specific ion channel. Important for reducing fluoride concentration in the cell, thus reducing its toxicity. In Granulibacter bethesdensis (strain ATCC BAA-1260 / CGDNIH1), this protein is Fluoride-specific ion channel FluC.